The sequence spans 140 residues: Tumor protein D55 (140 aa).

A disordered region spans residues 1 to 28 (MPHARTETSVGTYESHSTSELEDLTEPE). Positions 7–18 (ETSVGTYESHST) are enriched in polar residues. Positions 28-57 (EQRELKTKLTKLEAEIVTLRHVLAAKERRC) form a coiled coil.

The protein belongs to the TPD52 family. Interacts with TPD52L2. In terms of tissue distribution, specifically expressed in testis. Expressed at 5.6-fold higher levels in adult testis than in fetal testis.

The polypeptide is Tumor protein D55 (TPD52L3) (Homo sapiens (Human)).